The chain runs to 1090 residues: Protein unc-13 homolog D (1090 aa).

Positions 92 to 239 constitute a C2 1 domain; that stretch reads EPEEHQQTLQ…FKEARKDKGQ (148 aa). The Ca(2+) site is built by D127 and D133. S150 carries the post-translational modification Phosphoserine. Residues D206 and D208 each contribute to the Ca(2+) site. An interaction with RAB27A region spans residues 240–543; it reads DDFLGNVVLR…AKRVQDHTTV (304 aa). Residues 557 to 677 enclose the MHD1 domain; the sequence is FQLYISLKEL…RLALVYCSLI (121 aa). An MHD2 domain is found at 788–895; that stretch reads EDAILPLMKF…ASSRELIRKY (108 aa). Residues 910-1035 form the C2 2 domain; the sequence is ELGAVTVKAS…PGLSGSEEPG (126 aa). Ca(2+) is bound by residues L940, D941, D947, D1005, D1007, and D1013. The segment at 1026–1048 is disordered; it reads PGLSGSEEPGEVPQTRLPLTYPA.

Belongs to the unc-13 family. As to quaternary structure, interacts with DOC2A. Interacts with RAB27A. Interacts with RHOG; the interaction increases RhoG affinity to the membrane lipids, targets UNC13D to membrane lipids and facilitates cytotoxic granule (CG) docking to the plasma membrane. It depends on Ca(2+) as a cofactor. In terms of tissue distribution, expressed at high levels in spleen, thymus and leukocytes. Also expressed in lung and placenta, and at very low levels in brain, heart, skeletal muscle and kidney. Expressed in cytotoxic T-lymphocytes (CTL) and mast cells.

Its subcellular location is the cytoplasm. It is found in the membrane. It localises to the late endosome. The protein localises to the recycling endosome. The protein resides in the lysosome. In terms of biological role, plays a role in cytotoxic granule exocytosis in lymphocytes. Required for both granule maturation and granule docking and priming at the immunologic synapse. Regulates assembly of recycling and late endosomal structures, leading to the formation of an endosomal exocytic compartment that fuses with perforin-containing granules at the immunologic synapse and licences them for exocytosis. Regulates Ca(2+)-dependent secretory lysosome exocytosis in mast cells. The sequence is that of Protein unc-13 homolog D (UNC13D) from Homo sapiens (Human).